A 466-amino-acid polypeptide reads, in one-letter code: 3-isopropylmalate dehydratase large subunit (466 aa).

[4Fe-4S] cluster contacts are provided by C347, C407, and C410.

The protein belongs to the aconitase/IPM isomerase family. LeuC type 1 subfamily. As to quaternary structure, heterodimer of LeuC and LeuD. [4Fe-4S] cluster is required as a cofactor.

It catalyses the reaction (2R,3S)-3-isopropylmalate = (2S)-2-isopropylmalate. It functions in the pathway amino-acid biosynthesis; L-leucine biosynthesis; L-leucine from 3-methyl-2-oxobutanoate: step 2/4. In terms of biological role, catalyzes the isomerization between 2-isopropylmalate and 3-isopropylmalate, via the formation of 2-isopropylmaleate. In Escherichia coli O45:K1 (strain S88 / ExPEC), this protein is 3-isopropylmalate dehydratase large subunit.